Reading from the N-terminus, the 427-residue chain is 3-phosphoshikimate 1-carboxyvinyltransferase (427 aa).

K23, S24, and R28 together coordinate 3-phosphoshikimate. K23 contributes to the phosphoenolpyruvate binding site. Phosphoenolpyruvate-binding residues include G97 and R125. 3-phosphoshikimate contacts are provided by S169, S170, Q171, S197, D313, N336, and K340. Q171 lines the phosphoenolpyruvate pocket. The active-site Proton acceptor is D313. Phosphoenolpyruvate is bound by residues R344, R386, and K411.

It belongs to the EPSP synthase family. As to quaternary structure, monomer.

The protein localises to the cytoplasm. It carries out the reaction 3-phosphoshikimate + phosphoenolpyruvate = 5-O-(1-carboxyvinyl)-3-phosphoshikimate + phosphate. Its pathway is metabolic intermediate biosynthesis; chorismate biosynthesis; chorismate from D-erythrose 4-phosphate and phosphoenolpyruvate: step 6/7. Its function is as follows. Catalyzes the transfer of the enolpyruvyl moiety of phosphoenolpyruvate (PEP) to the 5-hydroxyl of shikimate-3-phosphate (S3P) to produce enolpyruvyl shikimate-3-phosphate and inorganic phosphate. The sequence is that of 3-phosphoshikimate 1-carboxyvinyltransferase from Yersinia ruckeri.